The chain runs to 474 residues: tRNA-2-methylthio-N(6)-dimethylallyladenosine synthase (474 aa).

The MTTase N-terminal domain maps to 3–120 (KKLHIKTWGC…LPEMINSVRG (118 aa)). [4Fe-4S] cluster contacts are provided by cysteine 12, cysteine 49, cysteine 83, cysteine 157, cysteine 161, and cysteine 164. Residues 143-375 (RAEGPTAFVS…QERINQQAMA (233 aa)) enclose the Radical SAM core domain. The TRAM domain occupies 378 to 441 (RRMLGTTQRI…PNSLRGKVVR (64 aa)).

It belongs to the methylthiotransferase family. MiaB subfamily. As to quaternary structure, monomer. Requires [4Fe-4S] cluster as cofactor.

It localises to the cytoplasm. It catalyses the reaction N(6)-dimethylallyladenosine(37) in tRNA + (sulfur carrier)-SH + AH2 + 2 S-adenosyl-L-methionine = 2-methylsulfanyl-N(6)-dimethylallyladenosine(37) in tRNA + (sulfur carrier)-H + 5'-deoxyadenosine + L-methionine + A + S-adenosyl-L-homocysteine + 2 H(+). Its function is as follows. Catalyzes the methylthiolation of N6-(dimethylallyl)adenosine (i(6)A), leading to the formation of 2-methylthio-N6-(dimethylallyl)adenosine (ms(2)i(6)A) at position 37 in tRNAs that read codons beginning with uridine. This is tRNA-2-methylthio-N(6)-dimethylallyladenosine synthase from Shigella boydii serotype 4 (strain Sb227).